The following is a 193-amino-acid chain: Xanthine phosphoribosyltransferase (193 aa).

Xanthine contacts are provided by leucine 20 and threonine 27. 128 to 132 (ANGQA) contacts 5-phospho-alpha-D-ribose 1-diphosphate. Residue lysine 156 participates in xanthine binding.

The protein belongs to the purine/pyrimidine phosphoribosyltransferase family. Xpt subfamily. As to quaternary structure, homodimer.

The protein resides in the cytoplasm. It carries out the reaction XMP + diphosphate = xanthine + 5-phospho-alpha-D-ribose 1-diphosphate. It functions in the pathway purine metabolism; XMP biosynthesis via salvage pathway; XMP from xanthine: step 1/1. Converts the preformed base xanthine, a product of nucleic acid breakdown, to xanthosine 5'-monophosphate (XMP), so it can be reused for RNA or DNA synthesis. The protein is Xanthine phosphoribosyltransferase of Streptococcus pyogenes serotype M3 (strain ATCC BAA-595 / MGAS315).